Consider the following 397-residue polypeptide: Putative gustatory receptor 85a (397 aa).

Residues M1–V56 lie on the Cytoplasmic side of the membrane. The chain crosses the membrane as a helical span at residues L57–F77. At D78–T90 the chain is on the extracellular side. A helical transmembrane segment spans residues L91–M111. Over G112–D151 the chain is Cytoplasmic. A helical membrane pass occupies residues Y152 to F172. At T173–C186 the chain is on the extracellular side. Residues F187 to I207 traverse the membrane as a helical segment. Topologically, residues T208–R268 are cytoplasmic. A helical transmembrane segment spans residues N269–L289. Over Q290–E293 the chain is Extracellular. Residues L294–V314 traverse the membrane as a helical segment. Topologically, residues N315–R375 are cytoplasmic. A helical transmembrane segment spans residues S376–T396. A topological domain (extracellular) is located at residue N397.

It belongs to the insect chemoreceptor superfamily. Gustatory receptor (GR) family. Gr22e subfamily.

It localises to the cell membrane. In terms of biological role, probable gustatory receptor which mediates acceptance or avoidance behavior, depending on its substrates. The protein is Putative gustatory receptor 85a (Gr85a) of Drosophila melanogaster (Fruit fly).